A 1754-amino-acid polypeptide reads, in one-letter code: Intraflagellar transport protein 172 homolog (1754 aa).

WD repeat units lie at residues 14 to 53 (EQIQ…RDKF), 64 to 103 (KNSY…NDKK), 110 to 149 (PQAS…QSLY), 151 to 190 (GDSI…EPLG), 194 to 232 (QHPV…RTFD), 283 to 322 (ACLY…TVWQ), and 519 to 557 (TLLS…EHVT). TPR repeat units lie at residues 623 to 656 (KAMW…SKAY), 690 to 723 (GSDL…DEAV), 748 to 781 (SEQQ…ARAA), 807 to 840 (SELY…ARAL), 852 to 885 (TALE…QKAL), 1041 to 1074 (RGKL…EDGY), 1140 to 1166 (DEVH…FLKA), 1167 to 1199 (NKPR…AVGE), 1211 to 1250 (TSNY…AEEH), 1282 to 1315 (SRSY…NAED), and 1698 to 1733 (FPVR…SPGS).

This sequence belongs to the IFT172 family.

The protein localises to the cell projection. It localises to the cilium. Its function is as follows. Required for the maintenance and formation of cilia. The chain is Intraflagellar transport protein 172 homolog from Drosophila melanogaster (Fruit fly).